A 168-amino-acid chain; its full sequence is Ribosome maturation factor RimM (168 aa).

The PRC barrel domain maps to 95 to 168 (KEGYYWSDLI…QIMVDWELDY (74 aa)).

The protein belongs to the RimM family. In terms of assembly, binds ribosomal protein uS19.

The protein resides in the cytoplasm. Functionally, an accessory protein needed during the final step in the assembly of 30S ribosomal subunit, possibly for assembly of the head region. Essential for efficient processing of 16S rRNA. May be needed both before and after RbfA during the maturation of 16S rRNA. It has affinity for free ribosomal 30S subunits but not for 70S ribosomes. The chain is Ribosome maturation factor RimM from Nitrosomonas eutropha (strain DSM 101675 / C91 / Nm57).